The primary structure comprises 263 residues: Rano class II histocompatibility antigen, B-1 beta chain (263 aa).

Residues 1 to 27 form the signal peptide; sequence MALQTPSFLLPAAVVVLMVLSSPGTEG. Residues 28–120 are beta-1; it reads RDSPRDFVYQ…SEVRTSLRRL (93 aa). Topologically, residues 28–224 are extracellular; it reads RDSPRDFVYQ…RAQSESAQSK (197 aa). Cystine bridges form between Cys42–Cys104 and Cys143–Cys199. Residue Asn46 is glycosylated (N-linked (GlcNAc...) asparagine). The beta-2 stretch occupies residues 121–214; that stretch reads EQPNVAISLS…SLESPVTVEW (94 aa). The region spanning 123–211 is the Ig-like C1-type domain; sequence PNVAISLSRT…DHPSLESPVT (89 aa). The tract at residues 215 to 224 is connecting peptide; that stretch reads RAQSESAQSK. The helical transmembrane segment at 225 to 245 threads the bilayer; that stretch reads MLSGIGGFVLGVIFLGLGLFI. Residues 246-263 lie on the Cytoplasmic side of the membrane; sequence RHKRQKGPRGPPPAGLLQ. Lys251 is covalently cross-linked (Glycyl lysine isopeptide (Lys-Gly) (interchain with G-Cter in ubiquitin)).

This sequence belongs to the MHC class II family.

Its subcellular location is the membrane. Its function is as follows. Involved in the presentation of foreign antigens to the immune system. In Rattus norvegicus (Rat), this protein is Rano class II histocompatibility antigen, B-1 beta chain (RT1-Bb).